We begin with the raw amino-acid sequence, 235 residues long: Probable transcriptional regulatory protein CFF8240_0424 (235 aa).

This sequence belongs to the TACO1 family.

The protein localises to the cytoplasm. The protein is Probable transcriptional regulatory protein CFF8240_0424 of Campylobacter fetus subsp. fetus (strain 82-40).